A 197-amino-acid chain; its full sequence is MAVTVAVGTSNPIKYRAVLRAFSRYYDVRVVMVSVDSGVGPQPSGVADVVGGALARAVRAVEKADSYFGVGVEAGPIEFPASGGYVETQVAAIVDRDCRATIGMSPSFEVDRRVLALMLDGVEMEKAVGVERHGGLGESVGFVGVATSGAVTRQDLTEHAVIMALIPRLMGYGSIATVEEIAAQAGASVECRSTRAI.

9 to 14 contacts substrate; it reads TSNPIK. Positions 36 and 65 each coordinate Mg(2+).

It belongs to the YjjX NTPase family. In terms of assembly, homodimer. The cofactor is Mg(2+). It depends on Mn(2+) as a cofactor.

It carries out the reaction XTP + H2O = XDP + phosphate + H(+). It catalyses the reaction ITP + H2O = IDP + phosphate + H(+). Phosphatase that hydrolyzes non-canonical purine nucleotides such as XTP and ITP to their respective diphosphate derivatives. Probably excludes non-canonical purines from DNA/RNA precursor pool, thus preventing their incorporation into DNA/RNA and avoiding chromosomal lesions. In Aeropyrum pernix (strain ATCC 700893 / DSM 11879 / JCM 9820 / NBRC 100138 / K1), this protein is Probable inosine/xanthosine triphosphatase.